The sequence spans 248 residues: Granulin (248 aa).

It belongs to the polyhedrin family.

Component of the virus occlusion bodies, which are large proteinaceous structures, that protect the virus from the outside environment for extended periods until they are ingested by insect larvae. The sequence is that of Granulin from Choristoneura fumiferana (Spruce budworm moth).